A 666-amino-acid chain; its full sequence is Translation factor guf1, mitochondrial (666 aa).

The N-terminal 44 residues, 1–44 (MRGCLQLGRWLSAAPRCQAASLRPPTVFPSYRYNRSFSTTTIYY), are a transit peptide targeting the mitochondrion. Positions 68 to 248 (ERFRNFCIVA…TVVEKVPAPI (181 aa)) constitute a tr-type G domain. GTP contacts are provided by residues 77–84 (AHVDHGKS), 141–145 (DTPGH), and 195–198 (NKVD).

The protein belongs to the TRAFAC class translation factor GTPase superfamily. Classic translation factor GTPase family. LepA subfamily.

It is found in the mitochondrion inner membrane. The enzyme catalyses GTP + H2O = GDP + phosphate + H(+). Promotes mitochondrial protein synthesis. May act as a fidelity factor of the translation reaction, by catalyzing a one-codon backward translocation of tRNAs on improperly translocated ribosomes. Binds to mitochondrial ribosomes in a GTP-dependent manner. This chain is Translation factor guf1, mitochondrial (guf1), found in Penicillium rubens (strain ATCC 28089 / DSM 1075 / NRRL 1951 / Wisconsin 54-1255) (Penicillium chrysogenum).